Here is a 688-residue protein sequence, read N- to C-terminus: PR domain zinc finger protein 8 (688 aa).

In terms of domain architecture, SET spans 16–131; sequence KAVQQCLTDI…KDEELLVWYG (116 aa). Tyrosine 130 provides a ligand contact to S-adenosyl-L-methionine. A C2H2-type 1 zinc finger spans residues 154-182; the sequence is YTCLECSQRFQFEFPYVAHLRFRCPKRLH. Disordered stretches follow at residues 184–309 and 397–506; these read TDAN…GCKG and EEAA…PARS. Residues 192 to 208 show a composition bias toward gly residues; sequence QGGGLGTKDHGGGGGGK. 2 stretches are compositionally biased toward low complexity: residues 209–219 and 275–284; these read EQQQQQQQQQQ and GSSSCVAAPG. Gly residues-rich tracts occupy residues 414–424 and 470–489; these read AGGGVAGGGSN and LGGGGGAGTAGTAGGSGGGQ. 2 consecutive C2H2-type zinc fingers follow at residues 624 to 647 and 665 to 687; these read NWCAKCNASFRMTSDLVYHMRSHH and LKCPICNESFRERHHLSRHMTSH.

It belongs to the class V-like SAM-binding methyltransferase superfamily. Interacts with BHLHE22. Interacts with EPM2A and NHLRC1. This interaction sequesters EPM2A and NHLRC1 to the nucleus. As to expression, expressed in brain, heart, liver, testes, retina. Highest expression is observed in the retina and hippocampus; moderately expressed in the cortex and cerebellum. In the retina, it is expressed in bipolar and amacrine cells.

Its subcellular location is the nucleus. Probable histone methyltransferase, preferentially acting on 'Lys-9' of histone H3. Histone methyltransferase activity has not been confirmed in other species. Involved in the control of steroidogenesis through transcriptional repression of steroidogenesis marker genes such as CYP17A1 and LHCGR. Forms with BHLHE22 a transcriptional repressor complex controlling genes involved in neural development and neuronal differentiation. In the retina, it is required for rod bipolar and type 2 OFF-cone bipolar cell survival. The polypeptide is PR domain zinc finger protein 8 (Prdm8) (Mus musculus (Mouse)).